Reading from the N-terminus, the 411-residue chain is Glucose-1-phosphate adenylyltransferase (411 aa).

Residues G164, 179–180, and S197 contribute to the alpha-D-glucose 1-phosphate site; that span reads EK.

Belongs to the bacterial/plant glucose-1-phosphate adenylyltransferase family. In terms of assembly, homotetramer.

The enzyme catalyses alpha-D-glucose 1-phosphate + ATP + H(+) = ADP-alpha-D-glucose + diphosphate. The protein operates within glycan biosynthesis; glycogen biosynthesis. Involved in the biosynthesis of ADP-glucose, a building block required for the elongation reactions to produce glycogen. Catalyzes the reaction between ATP and alpha-D-glucose 1-phosphate (G1P) to produce pyrophosphate and ADP-Glc. This Corynebacterium kroppenstedtii (strain DSM 44385 / JCM 11950 / CIP 105744 / CCUG 35717) protein is Glucose-1-phosphate adenylyltransferase.